Reading from the N-terminus, the 443-residue chain is Ribosomal protein uS12 methylthiotransferase RimO (443 aa).

One can recognise an MTTase N-terminal domain in the interval 5 to 115; it reads PNIGFISLGC…VMKHVHKYVP (111 aa). The [4Fe-4S] cluster site is built by cysteine 14, cysteine 50, cysteine 79, cysteine 147, cysteine 151, and cysteine 154. Residues 133–374 form the Radical SAM core domain; the sequence is LTPKHYAYLK…MQLQQKISAE (242 aa). The TRAM domain maps to 377 to 443; that stretch reads RQKIGRTLSV…ADEYDLWGEI (67 aa).

Belongs to the methylthiotransferase family. RimO subfamily. Requires [4Fe-4S] cluster as cofactor.

The protein resides in the cytoplasm. The enzyme catalyses L-aspartate(89)-[ribosomal protein uS12]-hydrogen + (sulfur carrier)-SH + AH2 + 2 S-adenosyl-L-methionine = 3-methylsulfanyl-L-aspartate(89)-[ribosomal protein uS12]-hydrogen + (sulfur carrier)-H + 5'-deoxyadenosine + L-methionine + A + S-adenosyl-L-homocysteine + 2 H(+). Its function is as follows. Catalyzes the methylthiolation of an aspartic acid residue of ribosomal protein uS12. This Histophilus somni (strain 2336) (Haemophilus somnus) protein is Ribosomal protein uS12 methylthiotransferase RimO.